Here is a 277-residue protein sequence, read N- to C-terminus: 14-3-3 protein (277 aa).

The interval 252-277 (LQTQEQQQQPVGEGAEAPKVEATEQQ) is disordered. Residues 267–277 (EAPKVEATEQQ) show a composition bias toward basic and acidic residues.

Belongs to the 14-3-3 family.

This is 14-3-3 protein from Eimeria tenella (Coccidian parasite).